The sequence spans 168 residues: MATEGNNLSQYDKNTIPNAKDFRFGIVVSEWNEEITEGLFQGAFDAWIENGVQKENIVRWNVPGSFELIYGCKKMQQSFEMLDAIVAVGNVIQGETKHFDFVCDGVTQGIKDLNVQTDIPVIFCVLTDNNIEQSRARSGGKHGNKGTEAAIAAIKMAQLRKDAKFYKG.

5-amino-6-(D-ribitylamino)uracil is bound by residues Trp-31, 65 to 67 (SFE), and 90 to 92 (NVI). Residue 95 to 96 (ET) participates in (2S)-2-hydroxy-3-oxobutyl phosphate binding. The active-site Proton donor is His-98. Position 123 (Phe-123) interacts with 5-amino-6-(D-ribitylamino)uracil. Arg-137 lines the (2S)-2-hydroxy-3-oxobutyl phosphate pocket.

It belongs to the DMRL synthase family.

The enzyme catalyses (2S)-2-hydroxy-3-oxobutyl phosphate + 5-amino-6-(D-ribitylamino)uracil = 6,7-dimethyl-8-(1-D-ribityl)lumazine + phosphate + 2 H2O + H(+). It participates in cofactor biosynthesis; riboflavin biosynthesis; riboflavin from 2-hydroxy-3-oxobutyl phosphate and 5-amino-6-(D-ribitylamino)uracil: step 1/2. Catalyzes the formation of 6,7-dimethyl-8-ribityllumazine by condensation of 5-amino-6-(D-ribitylamino)uracil with 3,4-dihydroxy-2-butanone 4-phosphate. This is the penultimate step in the biosynthesis of riboflavin. The sequence is that of 6,7-dimethyl-8-ribityllumazine synthase from Christiangramia forsetii (strain DSM 17595 / CGMCC 1.15422 / KT0803) (Gramella forsetii).